The sequence spans 427 residues: Alpha/beta hydrolase gkaG (427 aa).

D368 is an active-site residue.

The protein belongs to the AB hydrolase superfamily. Homodimer.

Its pathway is mycotoxin biosynthesis. Alpha/beta hydrolase; part of the gene cluster that mediates the biosynthesis of GKK1032, fungal natural products containing a macrocyclic para-cyclophane connected to a decahydrofluorene ring system that show potent antitumor activities. Within the pathway, gkaG catalyzes the Knoevenagel condensation that affords the 3-pyrrolin-2-one ring, using as substrate the polyketide-tyrosyl acyl thioester product of gkaA. The pathway begins with the PKS-NRPS gkaA which, with the help of the trans-enoyl reductase gkaC, synthesizes the polyketide-tyrosyl acyl thioester product which can be reductively off-loaded by the terminal reductase (R) domain in gkaA. The alpha/beta hydrolase gkaG is then required to catalyze the subsequent Knoevenagel condensation that affords the 3-pyrrolin-2-one ring, whereas the three proteins gkaB, gkaX and gkaZ then function synergistically to form the cyclophane. The protein is Alpha/beta hydrolase gkaG of Penicillium citrinum.